Consider the following 129-residue polypeptide: Glycine cleavage system H protein (129 aa).

Positions 24–106 constitute a Lipoyl-binding domain; the sequence is TFTVGISEHA…YGDGWLFRIK (83 aa). K65 is subject to N6-lipoyllysine.

The protein belongs to the GcvH family. The glycine cleavage system is composed of four proteins: P, T, L and H. Requires (R)-lipoate as cofactor.

Its function is as follows. The glycine cleavage system catalyzes the degradation of glycine. The H protein shuttles the methylamine group of glycine from the P protein to the T protein. In Idiomarina loihiensis (strain ATCC BAA-735 / DSM 15497 / L2-TR), this protein is Glycine cleavage system H protein.